The following is a 166-amino-acid chain: MFPMVTEFMNYGQQTVRATRYIGQGFMITLSHANRLPVTVQYPYEKLITSERFRGRIHFEFDKCIACEVCVRVCPIDLPVVDWKLETDIRKKRLLNYSIDFGICIFCGNCVEYCPTNCLSMTEEYELSTYDRHELNYNQIALGRLPMSIIDDYTIRTILNLPEIKT.

2 4Fe-4S ferredoxin-type domains span residues glycine 55 to lysine 84 and leucine 95 to glutamate 124. [4Fe-4S] cluster-binding residues include cysteine 64, cysteine 67, cysteine 70, cysteine 74, cysteine 104, cysteine 107, cysteine 110, and cysteine 114.

The protein belongs to the complex I 23 kDa subunit family. In terms of assembly, NDH is composed of at least 16 different subunits, 5 of which are encoded in the nucleus. Requires [4Fe-4S] cluster as cofactor.

It localises to the plastid. It is found in the chloroplast thylakoid membrane. It catalyses the reaction a plastoquinone + NADH + (n+1) H(+)(in) = a plastoquinol + NAD(+) + n H(+)(out). The enzyme catalyses a plastoquinone + NADPH + (n+1) H(+)(in) = a plastoquinol + NADP(+) + n H(+)(out). Its function is as follows. NDH shuttles electrons from NAD(P)H:plastoquinone, via FMN and iron-sulfur (Fe-S) centers, to quinones in the photosynthetic chain and possibly in a chloroplast respiratory chain. The immediate electron acceptor for the enzyme in this species is believed to be plastoquinone. Couples the redox reaction to proton translocation, and thus conserves the redox energy in a proton gradient. This chain is NAD(P)H-quinone oxidoreductase subunit I, chloroplastic, found in Chaenactis santolinoides (Santolina pincushion).